A 280-amino-acid polypeptide reads, in one-letter code: ATP synthase gamma chain (280 aa).

The protein belongs to the ATPase gamma chain family. In terms of assembly, F-type ATPases have 2 components, CF(1) - the catalytic core - and CF(0) - the membrane proton channel. CF(1) has five subunits: alpha(3), beta(3), gamma(1), delta(1), epsilon(1). CF(0) has three main subunits: a, b and c.

It is found in the cell membrane. Produces ATP from ADP in the presence of a proton gradient across the membrane. The gamma chain is believed to be important in regulating ATPase activity and the flow of protons through the CF(0) complex. This Mycoplasma capricolum subsp. capricolum (strain California kid / ATCC 27343 / NCTC 10154) protein is ATP synthase gamma chain.